The following is a 133-amino-acid chain: uncharacterized protein (133 aa).

This is an uncharacterized protein from Human adenovirus B serotype 7 (HAdV-7).